The primary structure comprises 155 residues: METPRASLSLGRWSLWLLLLGLALPSASAQALSYREAVLRAVDQLNEQSSEPNIYRLLELDQPPQDDEDPDSPKRVSFRVKETVCSRTTQQPPEQCDFKENGLLKRCEGTVTLDQVRGNFDITCNNHQSIRITKQPWAPPQAARLCRIVVIRVCR.

A signal peptide spans 1 to 29; it reads METPRASLSLGRWSLWLLLLGLALPSASA. Glutamine 30 is subject to Pyrrolidone carboxylic acid. The propeptide occupies 30–143; sequence QALSYREAVL…KQPWAPPQAA (114 aa). 3 disulfide bridges follow: cysteine 85–cysteine 96, cysteine 107–cysteine 124, and cysteine 146–cysteine 154.

This sequence belongs to the cathelicidin family. In terms of tissue distribution, large granules of neutrophils.

Its subcellular location is the secreted. Potent microbicidal activity; active against S.aureus and E.coli. This chain is Cathelicidin-1 (CATHL1), found in Bos taurus (Bovine).